The sequence spans 368 residues: Zinc finger protein 24 (368 aa).

Residue Lys-22 forms a Glycyl lysine isopeptide (Lys-Gly) (interchain with G-Cter in SUMO2) linkage. Lys-27 participates in a covalent cross-link: Glycyl lysine isopeptide (Lys-Gly) (interchain with G-Cter in SUMO1); alternate. A Glycyl lysine isopeptide (Lys-Gly) (interchain with G-Cter in SUMO2); alternate cross-link involves residue Lys-27. The SCAN box domain occupies 52 to 134 (RQRFRQFGYQ…TVLEDLESEL (83 aa)). Ser-132 and Ser-142 each carry phosphoserine. Glycyl lysine isopeptide (Lys-Gly) (interchain with G-Cter in SUMO2) cross-links involve residues Lys-147, Lys-177, and Lys-236. The C2H2-type 1 zinc-finger motif lies at 251–273 (HICDECGKHFSQGSALILHQRIH). The interval 251–301 (HICDECGKHFSQGSALILHQRIHSGEKPYGCVECGKAFSRSSILVQHQRVH) is necessary and sufficient for nuclear localization. Ser-274 bears the Phosphoserine mark. Residues Lys-277 and Lys-286 each participate in a glycyl lysine isopeptide (Lys-Gly) (interchain with G-Cter in SUMO2) cross-link. 3 consecutive C2H2-type zinc fingers follow at residues 279-301 (YGCV…QRVH), 307-329 (YKCL…QRIH), and 335-357 (YECV…QRRH). Ser-292 carries the post-translational modification Phosphoserine. The residue at position 335 (Tyr-335) is a Phosphotyrosine. Glycyl lysine isopeptide (Lys-Gly) (interchain with G-Cter in SUMO2) cross-links involve residues Lys-361 and Lys-367.

The protein belongs to the krueppel C2H2-type zinc-finger protein family. In terms of processing, sumoylated.

The protein localises to the nucleus. Its function is as follows. Transcription factor required for myelination of differentiated oligodendrocytes. Required for the conversion of oligodendrocytes from the premyelinating to the myelinating state. In the developing central nervous system (CNS), involved in the maintenance in the progenitor stage by promoting the cell cycle. Specifically binds to the 5'-TCAT-3' DNA sequence. Has transcription repressor activity in vitro. The protein is Zinc finger protein 24 (ZNF24) of Pongo abelii (Sumatran orangutan).